Here is a 196-residue protein sequence, read N- to C-terminus: Large ribosomal subunit protein bL25 (196 aa).

It belongs to the bacterial ribosomal protein bL25 family. CTC subfamily. Part of the 50S ribosomal subunit; part of the 5S rRNA/L5/L18/L25 subcomplex. Contacts the 5S rRNA. Binds to the 5S rRNA independently of L5 and L18.

Functionally, this is one of the proteins that binds to the 5S RNA in the ribosome where it forms part of the central protuberance. This Bacteroides fragilis (strain ATCC 25285 / DSM 2151 / CCUG 4856 / JCM 11019 / LMG 10263 / NCTC 9343 / Onslow / VPI 2553 / EN-2) protein is Large ribosomal subunit protein bL25.